A 314-amino-acid chain; its full sequence is tRNA-cytidine(32) 2-sulfurtransferase (314 aa).

Residues 49-54 (SGGKDS) carry the PP-loop motif motif. [4Fe-4S] cluster contacts are provided by Cys-124, Cys-127, and Cys-215.

Belongs to the TtcA family. In terms of assembly, homodimer. It depends on Mg(2+) as a cofactor. The cofactor is [4Fe-4S] cluster.

It localises to the cytoplasm. The catalysed reaction is cytidine(32) in tRNA + S-sulfanyl-L-cysteinyl-[cysteine desulfurase] + AH2 + ATP = 2-thiocytidine(32) in tRNA + L-cysteinyl-[cysteine desulfurase] + A + AMP + diphosphate + H(+). It participates in tRNA modification. In terms of biological role, catalyzes the ATP-dependent 2-thiolation of cytidine in position 32 of tRNA, to form 2-thiocytidine (s(2)C32). The sulfur atoms are provided by the cysteine/cysteine desulfurase (IscS) system. This is tRNA-cytidine(32) 2-sulfurtransferase from Histophilus somni (strain 2336) (Haemophilus somnus).